Here is a 147-residue protein sequence, read N- to C-terminus: Vasopressin-neurophysin 2-copeptin (147 aa).

A disulfide bridge links C1 with C6. G9 carries the post-translational modification Glycine amide. Cystine bridges form between C22–C66, C25–C39, C33–C56, C40–C46, C73–C85, C79–C97, and C86–C91. Residue N114 is glycosylated (N-linked (GlcNAc...) asparagine).

The protein belongs to the vasopressin/oxytocin family. As to quaternary structure, interacts with vasopressin receptors V1bR/AVPR1B (Ki=85 pM), V1aR/AVPR1A (Ki=0.6 nM) and V2R/AVPR2 (Ki=4.9 nM). Interacts with oxytocin receptor (OXTR) (Ki=110 nM).

Its subcellular location is the secreted. Its function is as follows. Neurophysin 2 specifically binds vasopressin. In terms of biological role, vasopressin has a direct antidiuretic action on the kidney, it also causes vasoconstriction of the peripheral vessels. Acts by binding to vasopressin receptors (V1bR/AVPR1B, V1aR/AVPR1A, and V2R/AVPR2). The polypeptide is Vasopressin-neurophysin 2-copeptin (AVP) (Ovis aries (Sheep)).